We begin with the raw amino-acid sequence, 459 residues long: uncharacterized protein (459 aa).

Residues 9–67 form the TRAM domain; it reads KLEVGQTFPVTIKRLGINGEGVGYFKRQVVFIPGALPGEEVVAETTKIQRGFAEAKVKK. Cysteine 80, cysteine 86, cysteine 89, and cysteine 168 together coordinate [4Fe-4S] cluster. Residues glutamine 292, tyrosine 321, aspartate 342, and aspartate 390 each contribute to the S-adenosyl-L-methionine site. Cysteine 417 acts as the Nucleophile in catalysis.

Belongs to the class I-like SAM-binding methyltransferase superfamily. RNA M5U methyltransferase family.

This is an uncharacterized protein from Bacillus anthracis.